Here is a 148-residue protein sequence, read N- to C-terminus: Ribosome maturation factor RimP (148 aa).

Belongs to the RimP family.

It is found in the cytoplasm. Its function is as follows. Required for maturation of 30S ribosomal subunits. The polypeptide is Ribosome maturation factor RimP (Thermosipho africanus (strain TCF52B)).